We begin with the raw amino-acid sequence, 440 residues long: Xylose isomerase (440 aa).

Active-site residues include His100 and Asp103. Positions 231, 267, 270, 295, 306, 308, and 338 each coordinate Mg(2+).

This sequence belongs to the xylose isomerase family. In terms of assembly, homotetramer. Requires Mg(2+) as cofactor.

It localises to the cytoplasm. The catalysed reaction is alpha-D-xylose = alpha-D-xylulofuranose. The sequence is that of Xylose isomerase from Paraburkholderia phytofirmans (strain DSM 17436 / LMG 22146 / PsJN) (Burkholderia phytofirmans).